An 894-amino-acid chain; its full sequence is Myb-like protein K (894 aa).

Residues 93–139 (LQQQQQSPVTNVATNTPPTLQHSISSPSPNNFNNNNNANNQFLSPNS) show a composition bias toward low complexity. 4 disordered regions span residues 93–221 (LQQQ…SASS), 299–353 (QVGN…QPIT), 492–539 (QQQQ…LEMI), and 601–659 (AATT…HWTS). Residues 140–149 (PQVAKSSPSQ) show a composition bias toward polar residues. The segment covering 150-221 (NNPSTPIANT…SQSLNSSASS (72 aa)) has biased composition (low complexity). Polar residues predominate over residues 300 to 309 (VGNPMQQSND). 2 stretches are compositionally biased toward low complexity: residues 310 to 353 (MQPQ…QPIT) and 492 to 527 (QQQQ…PQQM). Composition is skewed to basic and acidic residues over residues 611–640 (GKEE…SKKD) and 649–659 (ASKEKTSHWTS). The HTH myb-type domain occupies 649–704 (ASKEKTSHWTSEEHNKFLEAVQQFGIKDYHAIAKFVQTRNHHQVRTHVNTYLKNQK). Positions 677–700 (YHAIAKFVQTRNHHQVRTHVNTYL) form a DNA-binding region, H-T-H motif. The disordered stretch occupies residues 703–852 (QKKAEAATSS…EYNSGFDSNS (150 aa)). Low complexity-rich tracts occupy residues 710 to 742 (TSST…QPPI), 751 to 805 (QQQQ…QQPQ), and 815 to 845 (PPNN…NEYN).

The protein resides in the nucleus. The chain is Myb-like protein K (mybK) from Dictyostelium discoideum (Social amoeba).